We begin with the raw amino-acid sequence, 261 residues long: Tryptophan synthase alpha chain (261 aa).

Catalysis depends on proton acceptor residues E49 and D60.

This sequence belongs to the TrpA family. As to quaternary structure, tetramer of two alpha and two beta chains.

The catalysed reaction is (1S,2R)-1-C-(indol-3-yl)glycerol 3-phosphate + L-serine = D-glyceraldehyde 3-phosphate + L-tryptophan + H2O. Its pathway is amino-acid biosynthesis; L-tryptophan biosynthesis; L-tryptophan from chorismate: step 5/5. Functionally, the alpha subunit is responsible for the aldol cleavage of indoleglycerol phosphate to indole and glyceraldehyde 3-phosphate. This Roseiflexus sp. (strain RS-1) protein is Tryptophan synthase alpha chain.